Consider the following 242-residue polypeptide: Tryptophan synthase alpha chain (242 aa).

Catalysis depends on proton acceptor residues E31 and D42.

Belongs to the TrpA family. As to quaternary structure, tetramer of two alpha and two beta chains.

The catalysed reaction is (1S,2R)-1-C-(indol-3-yl)glycerol 3-phosphate + L-serine = D-glyceraldehyde 3-phosphate + L-tryptophan + H2O. It functions in the pathway amino-acid biosynthesis; L-tryptophan biosynthesis; L-tryptophan from chorismate: step 5/5. In terms of biological role, the alpha subunit is responsible for the aldol cleavage of indoleglycerol phosphate to indole and glyceraldehyde 3-phosphate. The sequence is that of Tryptophan synthase alpha chain from Staphylococcus aureus (strain bovine RF122 / ET3-1).